The following is a 474-amino-acid chain: Synaptotagmin-15B (474 aa).

Disordered stretches follow at residues 1–62 and 75–128; these read MGVV…AASG and PRAA…PPAV. The segment covering 75 to 88 has biased composition (low complexity); the sequence is PRAAAGHQQHHGPP. C2 domains lie at 200 to 317 and 331 to 452; these read CLGR…RRVI and EFGD…EHWD.

Belongs to the synaptotagmin family.

The sequence is that of Synaptotagmin-15B from Homo sapiens (Human).